Reading from the N-terminus, the 82-residue chain is Toxin GTx1-15 (82 aa).

The first 21 residues, 1–21 (MKTSVVFVIAGLALLSVACYA), serve as a signal peptide directing secretion. Positions 22-46 (SELKEQSSINEVLSTIFHFEQPEER) are excised as a propeptide. Intrachain disulfides connect cysteine 48–cysteine 63, cysteine 55–cysteine 69, and cysteine 62–cysteine 76. Phenylalanine 80 carries the post-translational modification Phenylalanine amide.

It belongs to the neurotoxin 10 (Hwtx-1) family. 08 (Gtx1-15) subfamily. As to expression, expressed by the venom gland.

The protein localises to the secreted. In terms of biological role, potent voltage-gated sodium channel blocker. Potently inhibits the voltage-gated sodium channels Nav1.7/SCN9A (IC(50)=0.58-10 nM). Shows a moderate activity on Nav1.1/SCN1A (IC(50)=6 nM), Nav1.2/SCN2A (IC(50)=5-128 nM), Nav1.3/SCN3A (IC(50)=20.3-170 nM), and Nav1.6/SCN8A (IC(50)=17-20.1 nM). Shows an unclear inhibition of Nav1.4/SCN4A (IC(50)=200 nM to &gt;10 uM), Nav1.5/SCN5A (IC(50)=140 nM to &gt;10 uM) and Nav1.8/SCN10A (IC(50)=68-12200 nM). Weakly blocks the low voltage-gated calcium channels Cav3.1/CACNA1G (30% inhibition of the peak current by 9.8 nM of the toxin). It shows moderate affinity for lipid bilayers. The sequence is that of Toxin GTx1-15 from Grammostola rosea (Chilean rose tarantula).